Reading from the N-terminus, the 280-residue chain is Homeobox protein Hox-B1b (280 aa).

The disordered stretch occupies residues 46 to 65 (GRLAAPTSAPHQSPGLPLHH). Positions 170 to 175 (TFDWMK) match the Antp-type hexapeptide motif. Positions 195–254 (HNVIRTNFTTKQLTELEKEFHFNKYLTRARRVEVAASLELNETQVKIWFQNRRMKQKKRE) form a DNA-binding region, homeobox. The disordered stretch occupies residues 249 to 280 (KQKKREKLGGVLVHREKASGPESSPKAKESEP). The span at 261-280 (VHREKASGPESSPKAKESEP) shows a compositional bias: basic and acidic residues.

Belongs to the Antp homeobox family. Labial subfamily.

Its subcellular location is the nucleus. Sequence-specific transcription factor which is part of a developmental regulatory system that provides cells with specific positional identities on the anterior-posterior axis. This Takifugu rubripes (Japanese pufferfish) protein is Homeobox protein Hox-B1b (hoxb1b).